Consider the following 122-residue polypeptide: Acidic phospholipase A2 BpirPLA2-I (122 aa).

Intrachain disulfides connect cysteine 26/cysteine 115, cysteine 28/cysteine 44, cysteine 43/cysteine 95, cysteine 49/cysteine 122, cysteine 50/cysteine 88, cysteine 57/cysteine 81, and cysteine 75/cysteine 86. Ca(2+)-binding residues include tyrosine 27, glycine 29, and glycine 31. Residue histidine 47 is part of the active site. Aspartate 48 is a Ca(2+) binding site. Aspartate 89 is a catalytic residue. The short motif at isoleucine 105 to glutamate 117 is the Antiplatelet activity element.

It belongs to the phospholipase A2 family. Group II subfamily. D49 sub-subfamily. Requires Ca(2+) as cofactor. In terms of tissue distribution, expressed by the venom gland.

It localises to the secreted. The catalysed reaction is a 1,2-diacyl-sn-glycero-3-phosphocholine + H2O = a 1-acyl-sn-glycero-3-phosphocholine + a fatty acid + H(+). Its activity is regulated as follows. Inhibited by EDTA and p-bromophenacyl bromide (BPB). Functionally, snake venom phospholipase A2 (PLA2) that inhibits collagen/ADP-induced platelet aggregation, and induces hypotension in rats (activity abolished in the presence of p-bromophenacyl bromide). PLA2 catalyzes the calcium-dependent hydrolysis of the 2-acyl groups in 3-sn-phosphoglycerides. In Bothrops pirajai (Piraja's lancehead), this protein is Acidic phospholipase A2 BpirPLA2-I.